Consider the following 491-residue polypeptide: NADH-quinone oxidoreductase subunit N (491 aa).

14 helical membrane passes run Ala11–Ala31, Leu38–Ala58, Leu74–Gly94, Pro106–Asn126, Leu128–Phe148, Phe163–Ala183, Leu206–Phe226, Leu243–Trp263, Trp272–Ile292, Leu301–Val321, Met336–Leu356, Phe379–Phe399, Val410–Phe430, and Leu465–Leu485.

Belongs to the complex I subunit 2 family. In terms of assembly, NDH-1 is composed of 14 different subunits. Subunits NuoA, H, J, K, L, M, N constitute the membrane sector of the complex.

It localises to the cell inner membrane. The enzyme catalyses a quinone + NADH + 5 H(+)(in) = a quinol + NAD(+) + 4 H(+)(out). In terms of biological role, NDH-1 shuttles electrons from NADH, via FMN and iron-sulfur (Fe-S) centers, to quinones in the respiratory chain. The immediate electron acceptor for the enzyme in this species is believed to be ubiquinone. Couples the redox reaction to proton translocation (for every two electrons transferred, four hydrogen ions are translocated across the cytoplasmic membrane), and thus conserves the redox energy in a proton gradient. In Azoarcus sp. (strain BH72), this protein is NADH-quinone oxidoreductase subunit N.